The following is a 303-amino-acid chain: NAD kinase (303 aa).

Aspartate 71 acts as the Proton acceptor in catalysis. Residues 71–72 (DG), 145–146 (ND), arginine 156, arginine 173, aspartate 175, 186–191 (TGYSLS), and glutamine 245 each bind NAD(+).

The protein belongs to the NAD kinase family. Requires a divalent metal cation as cofactor.

It is found in the cytoplasm. It catalyses the reaction NAD(+) + ATP = ADP + NADP(+) + H(+). Involved in the regulation of the intracellular balance of NAD and NADP, and is a key enzyme in the biosynthesis of NADP. Catalyzes specifically the phosphorylation on 2'-hydroxyl of the adenosine moiety of NAD to yield NADP. This chain is NAD kinase, found in Magnetococcus marinus (strain ATCC BAA-1437 / JCM 17883 / MC-1).